A 739-amino-acid polypeptide reads, in one-letter code: Phosphoribosylformylglycinamidine synthase subunit PurL (739 aa).

The active site involves H54. The ATP site is built by Y57 and K96. A Mg(2+)-binding site is contributed by E98. Residues 99 to 102 and R121 each bind substrate; that span reads SHNH. The Proton acceptor role is filled by H100. D122 provides a ligand contact to Mg(2+). Position 245 (Q245) interacts with substrate. D273 provides a ligand contact to Mg(2+). 317 to 319 contributes to the substrate binding site; it reads ESQ. ATP is bound by residues D500 and G537. A Mg(2+)-binding site is contributed by N538. S540 provides a ligand contact to substrate.

This sequence belongs to the FGAMS family. Monomer. Part of the FGAM synthase complex composed of 1 PurL, 1 PurQ and 2 PurS subunits.

The protein resides in the cytoplasm. It carries out the reaction N(2)-formyl-N(1)-(5-phospho-beta-D-ribosyl)glycinamide + L-glutamine + ATP + H2O = 2-formamido-N(1)-(5-O-phospho-beta-D-ribosyl)acetamidine + L-glutamate + ADP + phosphate + H(+). It participates in purine metabolism; IMP biosynthesis via de novo pathway; 5-amino-1-(5-phospho-D-ribosyl)imidazole from N(2)-formyl-N(1)-(5-phospho-D-ribosyl)glycinamide: step 1/2. Functionally, part of the phosphoribosylformylglycinamidine synthase complex involved in the purines biosynthetic pathway. Catalyzes the ATP-dependent conversion of formylglycinamide ribonucleotide (FGAR) and glutamine to yield formylglycinamidine ribonucleotide (FGAM) and glutamate. The FGAM synthase complex is composed of three subunits. PurQ produces an ammonia molecule by converting glutamine to glutamate. PurL transfers the ammonia molecule to FGAR to form FGAM in an ATP-dependent manner. PurS interacts with PurQ and PurL and is thought to assist in the transfer of the ammonia molecule from PurQ to PurL. This chain is Phosphoribosylformylglycinamidine synthase subunit PurL, found in Bacillus cereus (strain AH187).